Here is a 519-residue protein sequence, read N- to C-terminus: (3S,6E)-nerolidol synthase 1 (519 aa).

5 residues coordinate Mg(2+): Asp-273, Asp-277, Asp-417, Ser-421, and Glu-425. Residues 273 to 277 (DDIFD) carry the DDXXD motif motif.

Belongs to the terpene synthase family. Tpsg subfamily. Mg(2+) serves as cofactor. Requires Mn(2+) as cofactor. In terms of tissue distribution, expressed in receptacle tissue. Not detected in leaves or green fruit.

It localises to the cytoplasm. Its subcellular location is the cytosol. It carries out the reaction (2E,6E)-farnesyl diphosphate + H2O = (3S,6E)-nerolidol + diphosphate. Its pathway is secondary metabolite biosynthesis; terpenoid biosynthesis. Functionally, involved in monoterpene (C10) and sesquiterpene (C15) biosynthesis. Converts geranyl diphosphate (GPP) into S-linalool and farnesyl diphosphate (FPP) into (3S)-E-nerolidol. Exclusively present and highly expressed in the fruit of cultivated (octaploid) varieties. The protein is (3S,6E)-nerolidol synthase 1 of Fragaria ananassa (Strawberry).